An 88-amino-acid polypeptide reads, in one-letter code: Small ribosomal subunit protein bS16c (88 aa).

It belongs to the bacterial ribosomal protein bS16 family.

It is found in the plastid. It localises to the chloroplast. The protein is Small ribosomal subunit protein bS16c of Helianthus annuus (Common sunflower).